The chain runs to 991 residues: Valine--tRNA ligase (991 aa).

A 'HIGH' region motif is present at residues P43 to H53. A 'KMSKS' region motif is present at residues K582–S586. K585 provides a ligand contact to ATP. The segment at A689 to R711 is disordered. Low complexity predominate over residues A693–A704. The stretch at L925 to R988 forms a coiled coil.

This sequence belongs to the class-I aminoacyl-tRNA synthetase family. ValS type 1 subfamily. Monomer.

Its subcellular location is the cytoplasm. The enzyme catalyses tRNA(Val) + L-valine + ATP = L-valyl-tRNA(Val) + AMP + diphosphate. Catalyzes the attachment of valine to tRNA(Val). As ValRS can inadvertently accommodate and process structurally similar amino acids such as threonine, to avoid such errors, it has a 'posttransfer' editing activity that hydrolyzes mischarged Thr-tRNA(Val) in a tRNA-dependent manner. The sequence is that of Valine--tRNA ligase from Xylella fastidiosa (strain M12).